The following is a 140-amino-acid chain: Cystatin-C (140 aa).

The first 20 residues, 1–20 (MASPLRSLMLLLAVLAVAWA), serve as a signal peptide directing secretion. A Secondary area of contact motif is present at residues 75–79 (QLVAG). Cystine bridges form between Cys-93–Cys-103 and Cys-117–Cys-137. The N-linked (GlcNAc...) asparagine glycan is linked to Asn-99.

This sequence belongs to the cystatin family.

Its subcellular location is the secreted. As an inhibitor of cysteine proteinases, this protein is thought to serve an important physiological role as a local regulator of this enzyme activity. Known to inhibit cathepsin B, H, and L. The chain is Cystatin-C (Cst3) from Rattus norvegicus (Rat).